Reading from the N-terminus, the 229-residue chain is Ribonuclease 3 (229 aa).

The 126-residue stretch at leucine 7–glycine 132 folds into the RNase III domain. Glutamate 45 is a Mg(2+) binding site. The active site involves aspartate 49. Positions 118 and 121 each coordinate Mg(2+). The active site involves glutamate 121. The DRBM domain maps to aspartate 157–alanine 226.

This sequence belongs to the ribonuclease III family. Homodimer. Mg(2+) is required as a cofactor.

Its subcellular location is the cytoplasm. It catalyses the reaction Endonucleolytic cleavage to 5'-phosphomonoester.. Its function is as follows. Digests double-stranded RNA. Involved in the processing of primary rRNA transcript to yield the immediate precursors to the large and small rRNAs (23S and 16S). Processes some mRNAs, and tRNAs when they are encoded in the rRNA operon. Processes pre-crRNA and tracrRNA of type II CRISPR loci if present in the organism. In Cereibacter sphaeroides (strain ATCC 17025 / ATH 2.4.3) (Rhodobacter sphaeroides), this protein is Ribonuclease 3.